A 201-amino-acid chain; its full sequence is Probable quinol oxidase subunit 3 (201 aa).

5 helical membrane-spanning segments follow: residues 20 to 40, 62 to 82, 91 to 111, 133 to 153, and 172 to 192; these read LGFW…FATL, LVLI…ISIY, LMMF…GFEI, FFIL…WIIC, and FIVS…FTAV.

Belongs to the cytochrome c oxidase subunit 3 family.

The protein resides in the cell membrane. It carries out the reaction 2 a quinol + O2 = 2 a quinone + 2 H2O. Its function is as follows. Catalyzes quinol oxidation with the concomitant reduction of oxygen to water. The chain is Probable quinol oxidase subunit 3 (qoxC) from Staphylococcus haemolyticus (strain JCSC1435).